Reading from the N-terminus, the 599-residue chain is Elongation factor 4 (599 aa).

The region spanning 5-187 (SHIRNFSIIA…ELVRLVPPPT (183 aa)) is the tr-type G domain. GTP is bound by residues 17–22 (DHGKST) and 134–137 (NKMD).

This sequence belongs to the TRAFAC class translation factor GTPase superfamily. Classic translation factor GTPase family. LepA subfamily.

Its subcellular location is the cell inner membrane. It catalyses the reaction GTP + H2O = GDP + phosphate + H(+). Required for accurate and efficient protein synthesis under certain stress conditions. May act as a fidelity factor of the translation reaction, by catalyzing a one-codon backward translocation of tRNAs on improperly translocated ribosomes. Back-translocation proceeds from a post-translocation (POST) complex to a pre-translocation (PRE) complex, thus giving elongation factor G a second chance to translocate the tRNAs correctly. Binds to ribosomes in a GTP-dependent manner. The polypeptide is Elongation factor 4 (Cellvibrio japonicus (strain Ueda107) (Pseudomonas fluorescens subsp. cellulosa)).